The primary structure comprises 687 residues: Guanine-nucleotide exchange factor YEL1 (687 aa).

Positions 14-27 (YGVSQKGYNDNFSE) are enriched in polar residues. 2 disordered regions span residues 14 to 35 (YGVS…LHGS) and 63 to 97 (AAND…TDQN). Residues 57-264 (ILQNKEAAND…SEYYKTLNET (208 aa)) form the SEC7 domain. Low complexity predominate over residues 73–83 (TTDTATAGTGT). T290 carries the phosphothreonine modification. Phosphoserine occurs at positions 293 and 299. Residues 412-551 (TSRRTSLSYL…DCINFWAGRI (140 aa)) form the PH domain.

Belongs to the YEL1 family.

The protein localises to the cytoplasm. The protein resides in the cell membrane. It localises to the bud neck. Its subcellular location is the bud tip. Functionally, guanine nucleotide exchange factor for ARF3 required for localization of ARF3 to the bud neck and tip and involved in actin patch polarization. The sequence is that of Guanine-nucleotide exchange factor YEL1 (YEL1) from Saccharomyces cerevisiae (strain YJM789) (Baker's yeast).